Reading from the N-terminus, the 182-residue chain is MTTAFPSQVRQNYHQDSEAAINRQINLELHASYVYLSMSFYFDRDDVALKNFAKYFLHQSHEEREHAEKLMKLQNQRGGRIFLQDIKKPDQDDWENGLKAMECALHLEKNVNESLLELHKLATDKNDPHLCDFLETHYLNEQVKAIKELGDHVTNLRRMGAPESGMAEYLFDKHTLGECDES.

M1 is subject to N-acetylmethionine. An N-acetylthreonine; in Ferritin heavy chain, N-terminally processed modification is found at T2. The Ferritin-like diiron domain occupies 11-160 (QNYHQDSEAA…DHVTNLRRMG (150 aa)). The Fe cation site is built by E28, E63, H66, E108, and Q142.

It belongs to the ferritin family. As to quaternary structure, oligomer of 24 subunits. There are two types of subunits: L (light) chain and H (heavy) chain. The major chain can be light or heavy, depending on the species and tissue type. The functional molecule forms a roughly spherical shell with a diameter of 12 nm and contains a central cavity into which the insoluble mineral iron core is deposited. Interacts with NCOA4; NCOA4 promotes targeting of the iron-binding ferritin complex to autolysosomes following starvation or iron depletion.

It localises to the cytoplasm. Its subcellular location is the lysosome. The protein localises to the cytoplasmic vesicle. It is found in the autophagosome. The catalysed reaction is 4 Fe(2+) + O2 + 4 H(+) = 4 Fe(3+) + 2 H2O. Stores iron in a soluble, non-toxic, readily available form. Important for iron homeostasis. Has ferroxidase activity. Iron is taken up in the ferrous form and deposited as ferric hydroxides after oxidation. Also plays a role in delivery of iron to cells. Mediates iron uptake in capsule cells of the developing kidney. Delivery to lysosomes is mediated by the cargo receptor NCOA4 for autophagic degradation and release of iron. This Equus caballus (Horse) protein is Ferritin heavy chain (FTH1).